The chain runs to 220 residues: Adenylate kinase (220 aa).

ATP is bound at residue 13–18; sequence GAGKGT. An NMP region spans residues 33–62; sequence ATGDMLRSQVARQTELGKEAKKIMDQGGLV. AMP contacts are provided by residues Thr34, Arg39, 60 to 62, 89 to 92, and Gln96; these read GLV and GFPR. Residues 130 to 167 form an LID region; that stretch reads GRLVHPGSGRSYHLEFNPPKVPMKDDVTGEPLIQRSDD. Residues Arg131 and 140-141 each bind ATP; that span reads SY. Residues Arg164 and Arg175 each coordinate AMP. Gln203 serves as a coordination point for ATP.

The protein belongs to the adenylate kinase family. AK2 subfamily. As to quaternary structure, monomer.

The protein localises to the cytoplasm. It localises to the cytosol. The protein resides in the mitochondrion intermembrane space. It is found in the nucleus. The enzyme catalyses AMP + ATP = 2 ADP. Catalyzes the reversible transfer of the terminal phosphate group between ATP and AMP. Plays an important role in cellular energy homeostasis and in adenine nucleotide metabolism. Adenylate kinase activity is critical for regulation of the phosphate utilization and the AMP de novo biosynthesis pathways. The sequence is that of Adenylate kinase (adk1) from Schizosaccharomyces pombe (strain 972 / ATCC 24843) (Fission yeast).